An 85-amino-acid polypeptide reads, in one-letter code: Small ribosomal subunit protein uS17 (85 aa).

This sequence belongs to the universal ribosomal protein uS17 family. In terms of assembly, part of the 30S ribosomal subunit.

One of the primary rRNA binding proteins, it binds specifically to the 5'-end of 16S ribosomal RNA. This Syntrophus aciditrophicus (strain SB) protein is Small ribosomal subunit protein uS17.